The following is a 330-amino-acid chain: GDP-mannose transporter (330 aa).

At 1–13 the chain is on the cytoplasmic side; the sequence is MSQLKVDNGPLSH. Residues 14–34 form a helical membrane-spanning segment; it reads VANSGPISIGAYCFSSIMMTV. The Lumenal segment spans residues 35–48; the sequence is TNKFVVNLKGFNMN. Residues 49-69 traverse the membrane as a helical segment; the sequence is FVMLFVQAAVCVNLLFFLRLL. At 70-81 the chain is on the cytoplasmic side; it reads GYAKFRPLNRTD. Residues 82-98 traverse the membrane as a helical segment; it reads AKNWFPITIFLVLMIYT. The Lumenal segment spans residues 99–104; the sequence is SSKSLQ. The chain crosses the membrane as a helical span at residues 105–124; sequence YLAVPIYTIFKNLTIILIAY. The Cytoplasmic portion of the chain corresponds to 125–138; sequence GEVLFFGGSVTAME. Residues 139–155 form a helical membrane-spanning segment; it reads LSSFLLMVLSSVVATLG. Residues 156–170 lie on the Lumenal side of the membrane; the sequence is DQQALKKTADAGASL. Residues 171–191 form a helical membrane-spanning segment; it reads FNIGYMWMFINCLSSAAFVLV. At 192–203 the chain is on the cytoplasmic side; the sequence is MRKRIKLTNFKD. The helical transmembrane segment at 204 to 224 threads the bilayer; sequence FDTMFYNNILSMPVLLALSFL. At 225 to 241 the chain is on the lumenal side; that stretch reads MEDWSTENLTKNLSRDS. Residues 242–262 form a helical membrane-spanning segment; the sequence is VTAMIISGMTAVCISYCSGWC. The Cytoplasmic segment spans residues 263 to 269; that stretch reads VRVTSST. The chain crosses the membrane as a helical span at residues 270 to 290; the sequence is TYSMVGALNKLPIALSGLIFF. Residues 291–294 are Lumenal-facing; that stretch reads DAPK. A helical membrane pass occupies residues 295-315; it reads NFLSIFSIFLGFLSGIVYAVA. The Cytoplasmic segment spans residues 316–330; the sequence is KQKKQQNPQPSAPIK.

This sequence belongs to the TPT transporter family. SLC35D subfamily. Homooligomer.

It localises to the golgi apparatus membrane. Its subcellular location is the cytoplasmic vesicle membrane. The protein resides in the endoplasmic reticulum membrane. In terms of biological role, involved in the import of GDP-mannose from the cytoplasm into the Golgi lumen. This chain is GDP-mannose transporter (VRG4), found in Kluyveromyces lactis (strain ATCC 8585 / CBS 2359 / DSM 70799 / NBRC 1267 / NRRL Y-1140 / WM37) (Yeast).